The primary structure comprises 127 residues: Histone H2B type 1-A (127 aa).

Proline 2 carries the post-translational modification N-acetylproline. Residues lysine 7, lysine 13, lysine 14, lysine 17, lysine 18, lysine 22, and lysine 25 each carry the N6-acetyllysine; alternate modification. N6-crotonyllysine; alternate is present on residues lysine 7, lysine 13, lysine 14, lysine 17, lysine 18, lysine 22, lysine 25, and lysine 36. Lysine 7 and lysine 13 each carry N6-lactoyllysine; alternate. Residue lysine 7 forms a Glycyl lysine isopeptide (Lys-Gly) (interchain with G-Cter in SUMO2); alternate linkage. An N6-lactoyllysine; alternate mark is found at lysine 17, lysine 18, lysine 22, and lysine 25. Residue lysine 22 forms a Glycyl lysine isopeptide (Lys-Gly) (interchain with G-Cter in SUMO2); alternate linkage. An N6-succinyllysine; alternate modification is found at lysine 36. Lysine 36 is covalently cross-linked (Glycyl lysine isopeptide (Lys-Gly) (interchain with G-Cter in ubiquitin); alternate). Serine 38 bears the Phosphoserine mark. At lysine 45 the chain carries N6-lactoyllysine; alternate. Position 48 is an N6-methyllysine (lysine 48). At lysine 59 the chain carries N6,N6-dimethyllysine. Arginine 81 is modified (dimethylated arginine). Lysine 87 carries the N6-acetyllysine; alternate modification. N6-lactoyllysine; alternate is present on lysine 87. Lysine 87 carries the post-translational modification N6,N6,N6-trimethyllysine; alternate. An omega-N-methylarginine mark is found at arginine 88 and arginine 94. An N6-lactoyllysine; alternate modification is found at lysine 110. Lysine 110 is modified (N6-methyllysine). Threonine 117 is modified (phosphothreonine). 2 positions are modified to N6-lactoyllysine; alternate: lysine 118 and lysine 122. An N6-succinyllysine; alternate mark is found at lysine 118 and lysine 122. An N6-methylated lysine; alternate modification is found at lysine 118. Lysine 122 participates in a covalent cross-link: Glycyl lysine isopeptide (Lys-Gly) (interchain with G-Cter in ubiquitin); alternate.

The protein belongs to the histone H2B family. The nucleosome is a histone octamer containing two molecules each of H2A, H2B, H3 and H4 assembled in one H3-H4 heterotetramer and two H2A-H2B heterodimers. Interacts with H2AB1; preferentially dimerizes with H2AB1 to form nucleosomes. In terms of processing, monoubiquitination at Lys-36 by the MSL1/MSL2 dimer is required for histone H3 'Lys-4' (H3K4me) and 'Lys-79' (H3K79me) methylation and transcription activation at specific gene loci, such as HOXA9 and MEIS1 loci. Similarly, monoubiquitination of Lys-122 (H2BK120Ub) by the RNF20/40 complex gives a specific tag for epigenetic transcriptional activation and is also prerequisite for histone H3 'Lys-4' and 'Lys-79' methylation. It also functions cooperatively with the FACT dimer to stimulate elongation by RNA polymerase II. H2BK120Ub also acts as a regulator of mRNA splicing: deubiquitination by USP49 is required for efficient cotranscriptional splicing of a large set of exons. Crotonylation (Kcr) is specifically present in male germ cells and marks testis-specific genes in post-meiotic cells, including X-linked genes that escape sex chromosome inactivation in haploid cells. Crotonylation marks active promoters and enhancers and confers resistance to transcriptional repressors. It is also associated with post-meiotically activated genes on autosomes. Post-translationally, acetylated during spermatogenesis. Acetylated form is most abundant in spermatogonia compared to spermatocytes and round spermatids. In terms of processing, phosphorylated at Thr-117 in spermatogonia, spermatocytes and round spermatids. Methylated at Lys-118 in spermatogonia, spermatocytes and round spermatids. Post-translationally, lactylated in macrophages by EP300/P300 by using lactoyl-CoA directly derived from endogenous or exogenous lactate, leading to stimulates gene transcription. As to expression, mainly expressed in testis, and the corresponding protein is also present in mature sperm. Also present in metaphase oocytes (at protein level).

It is found in the nucleus. It localises to the chromosome. Functionally, variant histone specifically required to direct the transformation of dissociating nucleosomes to protamine in male germ cells. Entirely replaces classical histone H2B prior nucleosome to protamine transition and probably acts as a nucleosome dissociating factor that creates a more dynamic chromatin, facilitating the large-scale exchange of histones. In condensing spermatids, the heterodimer between H2AB1 and H2BC1/TH2B is loaded onto the nucleosomes and promotes loading of transition proteins (TNP1 and TNP2) onto the nucleosomes. Inclusion of the H2AB1-H2BC1/TH2B dimer into chromatin opens the nucleosomes, releasing the nucleosomal DNA ends and allowing the invasion of nucleosomes by transition proteins (TNP1 and TNP2). Then, transition proteins drive the recruitment and processing of protamines, which are responsible for histone eviction. Also expressed maternally and is present in the female pronucleus, suggesting a similar role in protamine replacement by nucleosomes at fertilization. Core component of nucleosome. Nucleosomes wrap and compact DNA into chromatin, limiting DNA accessibility to the cellular machineries which require DNA as a template. Histones thereby play a central role in transcription regulation, DNA repair, DNA replication and chromosomal stability. DNA accessibility is regulated via a complex set of post-translational modifications of histones, also called histone code, and nucleosome remodeling. This Mus musculus (Mouse) protein is Histone H2B type 1-A.